The sequence spans 54 residues: Protein GndA (54 aa).

Residues 28-50 (LFVVIVSFQQRALTSSVPVFLAV) traverse the membrane as a helical segment.

It is found in the cell inner membrane. This chain is Protein GndA, found in Escherichia coli (strain K12).